A 235-amino-acid chain; its full sequence is Large ribosomal subunit protein uL1 (235 aa).

The protein belongs to the universal ribosomal protein uL1 family. As to quaternary structure, part of the 50S ribosomal subunit.

Functionally, binds directly to 23S rRNA. The L1 stalk is quite mobile in the ribosome, and is involved in E site tRNA release. Its function is as follows. Protein L1 is also a translational repressor protein, it controls the translation of the L11 operon by binding to its mRNA. The protein is Large ribosomal subunit protein uL1 of Arthrobacter sp. (strain FB24).